The chain runs to 692 residues: Putative ESX-1 scaffolding and assembly protein SaeA (692 aa).

The segment covering Met-1–Pro-21 has biased composition (basic and acidic residues). 2 disordered regions span residues Met-1 to Leu-23 and Pro-87 to Phe-134. Pro residues predominate over residues Ala-89–Gly-107.

The protein localises to the cytoplasm. In terms of biological role, may be involved in assembly of the ESX-1 / type VII specialized secretion system (T7SS), which exports several proteins including EsxA and EsxB. Involved in DNA conjugation in recipient (MKD8) but not donor (mc(2)155) strain. The protein is Putative ESX-1 scaffolding and assembly protein SaeA of Mycolicibacterium smegmatis (strain ATCC 700084 / mc(2)155) (Mycobacterium smegmatis).